The sequence spans 351 residues: Phosphate acetyltransferase (351 aa).

Belongs to the phosphate acetyltransferase and butyryltransferase family.

Its subcellular location is the cytoplasm. The enzyme catalyses acetyl-CoA + phosphate = acetyl phosphate + CoA. The protein operates within metabolic intermediate biosynthesis; acetyl-CoA biosynthesis; acetyl-CoA from acetate: step 2/2. This is Phosphate acetyltransferase (pta) from Rickettsia prowazekii (strain Madrid E).